A 137-amino-acid chain; its full sequence is Cellular retinoic acid-binding protein 1 (137 aa).

Residues 21 to 31 (KALGVNAMLRK) carry the Nuclear localization signal motif. Position 132-134 (132-134 (RIY)) interacts with all-trans-retinoate.

It belongs to the calycin superfamily. Fatty-acid binding protein (FABP) family.

It is found in the cytoplasm. Cytosolic CRABPs may regulate the access of retinoic acid to the nuclear retinoic acid receptors. In Hippocampus comes (Tiger tail seahorse), this protein is Cellular retinoic acid-binding protein 1 (crabp1).